Consider the following 122-residue polypeptide: Proteasome assembly chaperone 3 (122 aa).

M1 bears the N-acetylmethionine mark.

Belongs to the PSMG3 family. Homodimer. Interacts with PSMG4. Interacts directly with alpha and beta subunits of the 20S proteasome but dissociates before the formation of half-proteasomes, probably upon recruitment of POMP.

In terms of biological role, chaperone protein which promotes assembly of the 20S proteasome. May cooperate with PSMG1-PSMG2 heterodimers to orchestrate the correct assembly of proteasomes. This chain is Proteasome assembly chaperone 3, found in Homo sapiens (Human).